The following is a 292-amino-acid chain: Homoserine kinase (292 aa).

ATP is bound at residue 84-94; it reads PLSRGLGSSSA.

The protein belongs to the GHMP kinase family. Homoserine kinase subfamily.

It localises to the cytoplasm. It carries out the reaction L-homoserine + ATP = O-phospho-L-homoserine + ADP + H(+). It functions in the pathway amino-acid biosynthesis; L-threonine biosynthesis; L-threonine from L-aspartate: step 4/5. Functionally, catalyzes the ATP-dependent phosphorylation of L-homoserine to L-homoserine phosphate. This is Homoserine kinase from Campylobacter jejuni subsp. doylei (strain ATCC BAA-1458 / RM4099 / 269.97).